The primary structure comprises 522 residues: Proactivator polypeptide-like 1 (522 aa).

The N-terminal stretch at 1-17 is a signal peptide; the sequence is MLCALILWSGLLGAARA. The propeptide occupies 18 to 59; sequence SPISVPRECAKGSEVWCQDLQAAAKCRAVRHCQSAVWNKPTV. Positions 19 to 59 constitute a Saposin A-type 1 domain; the sequence is PISVPRECAKGSEVWCQDLQAAAKCRAVRHCQSAVWNKPTV. Saposin B-type domains are found at residues 60–144, 183–261, 291–371, and 393–474; these read KSLP…EPLQ, EGAV…ERES, LGLT…GSKR, and QGSF…HGPK. 3 cysteine pairs are disulfide-bonded: Cys-64/Cys-140, Cys-67/Cys-134, and Cys-95/Cys-107. Positions 146-183 are excised as a propeptide; it reads HLAETTSERPLTQEDANEVMAPFLSNGALSFHPSQMPE. 3 disulfides stabilise this stretch: Cys-187/Cys-257, Cys-190/Cys-251, and Cys-216/Cys-227. Asn-204 carries an N-linked (GlcNAc...) asparagine glycan. The propeptide occupies 261–290; that stretch reads SAHWLTRVAAVDGVPSLEMEMPRTNELQMQ. Cystine bridges form between Cys-295–Cys-367, Cys-298–Cys-361, and Cys-326–Cys-337. An N-linked (GlcNAc...) (high mannose) asparagine glycan is attached at Asn-312. The propeptide occupies 371-392; that stretch reads RRARSISRAVATTPSLPVDEEN. Intrachain disulfides connect Cys-397–Cys-470, Cys-400–Cys-464, and Cys-428–Cys-439. The propeptide occupies 475-522; sequence TPLLGTDQCVMGPSFWCKSPEAAEMCNALEHCQRLVWKKPVSKINEQP. Positions 476–516 constitute a Saposin A-type 2 domain; that stretch reads PLLGTDQCVMGPSFWCKSPEAAEMCNALEHCQRLVWKKPVS.

Its subcellular location is the secreted. In terms of biological role, may activate the lysosomal degradation of sphingolipids. The sequence is that of Proactivator polypeptide-like 1 (Psapl1) from Mus musculus (Mouse).